The primary structure comprises 734 residues: Alpha-catulin (734 aa).

Phosphoserine occurs at positions 374 and 538.

Belongs to the vinculin/alpha-catenin family. As to quaternary structure, interacts with ARHGEF1. Interacts with DTNA. The interaction is required for correct localization of both CTNL1 and DTNA. As to expression, widely expressed. Expressed at lower level in neural tissues and at the highest level in the adrenal gland.

It is found in the cytoplasm. Its subcellular location is the cytoskeleton. It localises to the cell membrane. In terms of biological role, may modulate the Rho pathway signaling by providing a scaffold for the Lbc Rho guanine nucleotide exchange factor (ARHGEF1). The polypeptide is Alpha-catulin (CTNNAL1) (Homo sapiens (Human)).